The sequence spans 293 residues: Bifunctional protein FolD (293 aa).

NADP(+)-binding positions include 169–171, Thr-196, and Val-237; that span reads GRG.

This sequence belongs to the tetrahydrofolate dehydrogenase/cyclohydrolase family. As to quaternary structure, homodimer.

The catalysed reaction is (6R)-5,10-methylene-5,6,7,8-tetrahydrofolate + NADP(+) = (6R)-5,10-methenyltetrahydrofolate + NADPH. It catalyses the reaction (6R)-5,10-methenyltetrahydrofolate + H2O = (6R)-10-formyltetrahydrofolate + H(+). The protein operates within one-carbon metabolism; tetrahydrofolate interconversion. Its function is as follows. Catalyzes the oxidation of 5,10-methylenetetrahydrofolate to 5,10-methenyltetrahydrofolate and then the hydrolysis of 5,10-methenyltetrahydrofolate to 10-formyltetrahydrofolate. This Leifsonia xyli subsp. xyli (strain CTCB07) protein is Bifunctional protein FolD.